A 175-amino-acid polypeptide reads, in one-letter code: Large ribosomal subunit protein uL10 (175 aa).

It belongs to the universal ribosomal protein uL10 family. Part of the ribosomal stalk of the 50S ribosomal subunit. The N-terminus interacts with L11 and the large rRNA to form the base of the stalk. The C-terminus forms an elongated spine to which L12 dimers bind in a sequential fashion forming a multimeric L10(L12)X complex.

Functionally, forms part of the ribosomal stalk, playing a central role in the interaction of the ribosome with GTP-bound translation factors. This Xylella fastidiosa (strain M12) protein is Large ribosomal subunit protein uL10.